A 321-amino-acid polypeptide reads, in one-letter code: Ribose-phosphate pyrophosphokinase (321 aa).

Residues 44-46 (DGE) and 103-104 (RQ) each bind ATP. Residues H137 and D179 each contribute to the Mg(2+) site. The active site involves K202. D-ribose 5-phosphate contacts are provided by residues R204, D228, and 232-236 (DTAGT).

The protein belongs to the ribose-phosphate pyrophosphokinase family. Class I subfamily. As to quaternary structure, homohexamer. It depends on Mg(2+) as a cofactor.

Its subcellular location is the cytoplasm. The enzyme catalyses D-ribose 5-phosphate + ATP = 5-phospho-alpha-D-ribose 1-diphosphate + AMP + H(+). The protein operates within metabolic intermediate biosynthesis; 5-phospho-alpha-D-ribose 1-diphosphate biosynthesis; 5-phospho-alpha-D-ribose 1-diphosphate from D-ribose 5-phosphate (route I): step 1/1. Functionally, involved in the biosynthesis of the central metabolite phospho-alpha-D-ribosyl-1-pyrophosphate (PRPP) via the transfer of pyrophosphoryl group from ATP to 1-hydroxyl of ribose-5-phosphate (Rib-5-P). This Staphylococcus haemolyticus (strain JCSC1435) protein is Ribose-phosphate pyrophosphokinase.